The sequence spans 323 residues: tRNA U34 carboxymethyltransferase (323 aa).

Carboxy-S-adenosyl-L-methionine contacts are provided by residues lysine 91, tryptophan 105, lysine 110, glycine 130, 181–182 (IE), methionine 196, tyrosine 200, and arginine 315.

It belongs to the class I-like SAM-binding methyltransferase superfamily. CmoB family. As to quaternary structure, homotetramer.

The catalysed reaction is carboxy-S-adenosyl-L-methionine + 5-hydroxyuridine(34) in tRNA = 5-carboxymethoxyuridine(34) in tRNA + S-adenosyl-L-homocysteine + H(+). Catalyzes carboxymethyl transfer from carboxy-S-adenosyl-L-methionine (Cx-SAM) to 5-hydroxyuridine (ho5U) to form 5-carboxymethoxyuridine (cmo5U) at position 34 in tRNAs. This Serratia proteamaculans (strain 568) protein is tRNA U34 carboxymethyltransferase.